Here is a 301-residue protein sequence, read N- to C-terminus: tRNA dimethylallyltransferase 1 (301 aa).

Residue 11 to 18 (GPTGVGKT) coordinates ATP. 13 to 18 (TGVGKT) provides a ligand contact to substrate. The interval 36–39 (DSRQ) is interaction with substrate tRNA.

It belongs to the IPP transferase family. In terms of assembly, monomer. The cofactor is Mg(2+).

The catalysed reaction is adenosine(37) in tRNA + dimethylallyl diphosphate = N(6)-dimethylallyladenosine(37) in tRNA + diphosphate. In terms of biological role, catalyzes the transfer of a dimethylallyl group onto the adenine at position 37 in tRNAs that read codons beginning with uridine, leading to the formation of N6-(dimethylallyl)adenosine (i(6)A). This Bacteroides fragilis (strain YCH46) protein is tRNA dimethylallyltransferase 1.